The following is a 180-amino-acid chain: Probable chorismate pyruvate-lyase (180 aa).

Substrate contacts are provided by R76, L113, and E171.

Belongs to the UbiC family.

The protein resides in the cytoplasm. The enzyme catalyses chorismate = 4-hydroxybenzoate + pyruvate. The protein operates within cofactor biosynthesis; ubiquinone biosynthesis. Removes the pyruvyl group from chorismate, with concomitant aromatization of the ring, to provide 4-hydroxybenzoate (4HB) for the ubiquinone pathway. The protein is Probable chorismate pyruvate-lyase of Pseudoalteromonas translucida (strain TAC 125).